A 495-amino-acid chain; its full sequence is Aspartyl/glutamyl-tRNA(Asn/Gln) amidotransferase subunit B (495 aa).

This sequence belongs to the GatB/GatE family. GatB subfamily. Heterotrimer of A, B and C subunits.

The catalysed reaction is L-glutamyl-tRNA(Gln) + L-glutamine + ATP + H2O = L-glutaminyl-tRNA(Gln) + L-glutamate + ADP + phosphate + H(+). It catalyses the reaction L-aspartyl-tRNA(Asn) + L-glutamine + ATP + H2O = L-asparaginyl-tRNA(Asn) + L-glutamate + ADP + phosphate + 2 H(+). Its function is as follows. Allows the formation of correctly charged Asn-tRNA(Asn) or Gln-tRNA(Gln) through the transamidation of misacylated Asp-tRNA(Asn) or Glu-tRNA(Gln) in organisms which lack either or both of asparaginyl-tRNA or glutaminyl-tRNA synthetases. The reaction takes place in the presence of glutamine and ATP through an activated phospho-Asp-tRNA(Asn) or phospho-Glu-tRNA(Gln). The chain is Aspartyl/glutamyl-tRNA(Asn/Gln) amidotransferase subunit B from Prochlorococcus marinus (strain MIT 9313).